The primary structure comprises 287 residues: 3-beta-hydroxysteroid sulfotransferase (287 aa).

44–49 serves as a coordination point for 3'-phosphoadenylyl sulfate; it reads KSGTNW. Substrate contacts are provided by tryptophan 72 and tryptophan 77. The Proton acceptor role is filled by histidine 99. 3'-phosphoadenylyl sulfate-binding positions include arginine 121, serine 129, tyrosine 184, 218–223, and 247–249; these read SSFKFM and RKG.

It belongs to the sulfotransferase 1 family. In terms of assembly, homodimer. In terms of tissue distribution, liver, intestine and kidney.

The protein resides in the cytoplasm. It carries out the reaction an alcohol + 3'-phosphoadenylyl sulfate = an alkyl sulfate + adenosine 3',5'-bisphosphate + H(+). Sulfotransferase that utilizes 3'-phospho-5'-adenylyl sulfate (PAPS) as sulfonate donor to catalyze the sulfonation of 3-beta-hydroxyl groups of neutral steroids. High preference for C21 steroid (pregnenolone). This chain is 3-beta-hydroxysteroid sulfotransferase (STD2), found in Cavia porcellus (Guinea pig).